The following is a 1862-amino-acid chain: MGFCKADAATSFLRAARSGNLDKALDHLRNGVDINTCNQNGLNGLHLASKEGHVKMVVELLHKEIILETTTKKGNTALHIAALAGQDEVVRELVNYGANVNAQSQKGFTPLYMAAQENHLEVVKFLLENGANQNVATEDGFTPLAVALQQGHENVVAHLINYGTKGKVRLPALHIAARNDDTRTAAVLLQNDPNPDVLSKTGFTPLHIAAHYENLNVAQLLLNRGASVNFTPQNGITPLHIASRRGNVIMVRLLLDRGAQIETRTKDELTPLHCAARNGHVRISEILLDHGAPIQAKTKNGLSPIHMAAQGDHLDCVRLLLQYNAEIDDITLDHLTPLHVAAHCGHHRVAKVLLDKGAKPNSRALNGFTPLHIACKKNHIRVMELLLKTGASIDAVTESGLTPLHVASFMGHLPIVKNLLQRGASPNVSNVKVETPLHMAARAGHTEVAKYLLQNKAKANAKAKDDQTPLHCAARIGHTGMVKLLLENGASPNLATTAGHTPLHTAAREGHVDTALALLEKEASQACMTKKGFTPLHVAAKYGKVRLAELLLEHDAHPNAAGKNGLTPLHVAVHHNNLDIVKLLLPRGGSPHSPAWNGYTPLHIAAKQNQIEVARSLLQYGGSANAESVQGVTPLHLAAQEGHTEMVALLLSKQANGNLGNKSGLTPLHLVSQEGHVPVADVLIKHGVTVDATTRMGYTPLHVASHYGNIKLVKFLLQHQADVNAKTKLGYSPLHQAAQQGHTDIVTLLLKNGASPNEVSSNGTTPLAIAKRLGYISVTDVLKVVTDETSVVLVSDKHRMSYPETVDEILDVSEDEGDELVGSKAERRDSRDVGEEKELLDFVPKLDQVVESPAIPRIPCVTPETVVIRSEDQEQASKEYDEDSLIPSSPATETSDNISPVASPVHTGFLVSFMVDARGGSMRGSRHNGLRVVIPPRTCAAPTRITCRLVKPQKLNTPPPLAEEEGLASRIIALGPTGAQFLSPVIVEIPHFASHGRGDRELVVLRSENGSVWKEHKSRYGESYLDQILNGMDEELGSLEELEKKRVCRIITTDFPLYFVIMSRLCQDYDTIGPEGGSLRSKLVPLVQATFPENAVTKKVKLALQAQPVPDELVTKLLGNQATFSPIVTVEPRRRKFHRPIGLRIPLPPSWTDNPRDSGEGDTTSLRLLCSVIGGTDQAQWEDITGTTKLIYANECANFTTNVSARFWLSDCPRTAEAVHFATLLYKELTAVPYMAKFVIFAKMNDAREGRLRCYCMTDDKVDKTLEQHENFVEVARSRDIEVLEGMPLFAELSGNLVPVKKAAQQRSFHFQSFRENRLAIPVKVRDSSREPGGFLSFLRKTMKYEDTQHILCHLNITMPPCTKGSGAEDRRRTLTPLTLRYSILSESRLGFTSDTDRVEMRMAVIREHLGLSWAELARELQFSVEDINRIRVENPNSLLDQSTALLTLWVDREGENAKMENLYTALRNIDRSEIVNMLEGSGRQSRNLKPERRHGDREYSLSPSQVNGYSSLQDELLSPASLQYALPSPLCADQYWNEVTVIDAIPLAATEHDTMLEMSDMQVWSAGLTPSLVTAEDSSLECSKAEDSDAIPEWKLEGAHSEDTQGPELGSQDLVEDDTVDSDATNGLADLLGQEEGQRSEKKRQEVSGTEQDTETEVSLVSGQQRVHARITDSPSVRQVLDRSQARTLDWDKQGSTAVHPQEATQSSWQEEVTQGPHSFQRRITTIQGPEPGALQEYEQVLVSTREHVQRGPPETGSPKAGKEPSLWAPESAFSQEVQGDELQNIPGEQVTEEQFTDEQGNIVTKKIIRKVVRQVDSSGAIDTQQHEEVELRGSGLQPDLIEGRKGAQIVKRASLKRGKQ.

The interval 1–827 is 89 kDa domain; sequence MGFCKADAAT…DELVGSKAER (827 aa). ANK repeat units follow at residues 40–69, 73–102, 106–135, 139–168, 170–197, 201–230, 234–263, 267–296, 300–329, 333–362, 366–395, 399–428, 432–461, 465–494, 498–527, 531–560, 564–593, 597–626, 630–659, 663–692, 696–725, 729–758, and 762–791; these read NGLNGLHLASKEGHVKMVVELLHKEIILET, KGNTALHIAALAGQDEVVRELVNYGANVNA, KGFTPLYMAAQENHLEVVKFLLENGANQNV, DGFTPLAVALQQGHENVVAHLINYGTKGKV, LPALHIAARNDDTRTAAVLLQNDPNPDV, TGFTPLHIAAHYENLNVAQLLLNRGASVNF, NGITPLHIASRRGNVIMVRLLLDRGAQIET, DELTPLHCAARNGHVRISEILLDHGAPIQA, NGLSPIHMAAQGDHLDCVRLLLQYNAEIDD, DHLTPLHVAAHCGHHRVAKVLLDKGAKPNS, NGFTPLHIACKKNHIRVMELLLKTGASIDA, SGLTPLHVASFMGHLPIVKNLLQRGASPNV, KVETPLHMAARAGHTEVAKYLLQNKAKANA, DDQTPLHCAARIGHTGMVKLLLENGASPNL, AGHTPLHTAAREGHVDTALALLEKEASQAC, KGFTPLHVAAKYGKVRLAELLLEHDAHPNA, NGLTPLHVAVHHNNLDIVKLLLPRGGSPHS, NGYTPLHIAAKQNQIEVARSLLQYGGSANA, QGVTPLHLAAQEGHTEMVALLLSKQANGNL, SGLTPLHLVSQEGHVPVADVLIKHGVTVDA, MGYTPLHVASHYGNIKLVKFLLQHQADVNA, LGYSPLHQAAQQGHTDIVTLLLKNGASPNE, and NGTTPLAIAKRLGYISVTDVLKVVTDETSV. Position 55 is a phosphoserine (Lys-55). Asn-101 bears the (3S)-3-hydroxyasparagine; by HIF1AN; partial mark. Asn-229 carries the post-translational modification (3S)-3-hydroxyasparagine; by HIF1AN. Ser-425 is subject to Phosphoserine. 2 positions are modified to (3S)-3-hydroxyasparagine; by HIF1AN: Asn-427 and Asn-460. (3S)-3-hydroxyasparagine; by HIF1AN is present on residues Asn-625 and Asn-658. A (3S)-3-hydroxyaspartate; by HIF1AN modification is found at Asp-691. Asn-724 bears the (3S)-3-hydroxyasparagine; by HIF1AN mark. Phosphoserine is present on Ser-755. Residue Asn-757 is modified to (3S)-3-hydroxyasparagine; by HIF1AN. Phosphoserine is present on residues Ser-777, Ser-813, Ser-830, and Ser-852. The interval 812–834 is disordered; the sequence is VSEDEGDELVGSKAERRDSRDVG. Over residues 824–834 the composition is skewed to basic and acidic residues; that stretch reads KAERRDSRDVG. Thr-862 is modified (phosphothreonine). Residues 872 to 900 are disordered; that stretch reads DQEQASKEYDEDSLIPSSPATETSDNISP. The span at 886-900 shows a compositional bias: polar residues; that stretch reads IPSSPATETSDNISP. ZU5 domains follow at residues 909–1064 and 1066–1212; these read FLVS…IMSR and CQDY…LSDC. Thr-957 bears the Phosphothreonine mark. Position 1069 is a phosphotyrosine (Tyr-1069). A Phosphoserine modification is found at Ser-1078. Positions 1197–1331 are UPA domain; it reads ANFTTNVSAR…PVKVRDSSRE (135 aa). 2 positions are modified to phosphothreonine: Thr-1374 and Thr-1376. Ser-1386 and Ser-1388 each carry phosphoserine. Residues 1387 to 1862 form a 55 kDa regulatory domain region; that stretch reads ESRLGFTSDT…KRASLKRGKQ (476 aa). Thr-1396 carries the post-translational modification Phosphothreonine. Residues 1399–1483 enclose the Death domain; sequence VEMRMAVIRE…EIVNMLEGSG (85 aa). Ser-1424, Ser-1473, and Ser-1482 each carry phosphoserine. The tract at residues 1481-1506 is disordered; sequence GSGRQSRNLKPERRHGDREYSLSPSQ. Basic and acidic residues predominate over residues 1489 to 1500; sequence LKPERRHGDREY. A phosphoserine mark is found at Ser-1519, Ser-1529, and Ser-1612. Disordered regions lie at residues 1598–1720 and 1744–1767; these read EGAH…GPHS and VSTREHVQRGPPETGSPKAGKEPS. The span at 1637–1647 shows a compositional bias: basic and acidic residues; it reads EGQRSEKKRQE. Positions 1648–1666 are enriched in polar residues; the sequence is VSGTEQDTETEVSLVSGQQ. Ser-1660, Ser-1675, and Ser-1685 each carry phosphoserine. Basic and acidic residues predominate over residues 1681–1694; sequence VLDRSQARTLDWDK. Residues 1695 to 1720 are compositionally biased toward polar residues; sequence QGSTAVHPQEATQSSWQEEVTQGPHS.

Component of the ankyrin-1 complex in the erythrocyte, composed of ANK1, RHCE, RHAG, SLC4A1, EPB42, GYPA, GYPB and AQP1. Interacts with a number of integral membrane proteins and cytoskeletal proteins. Interacts (via N-terminus) with SPTB/spectrin (beta chain). Also interacts with TTN/titin. Isoform Mu17 interacts with OBSCN isoform 3/obscurin. Interacts with HIF1AN. Interacts (via ANK 1-5 repeats) with RHCE; this interaction mediates the primary membrane attachment site for ANK1. Interacts (via ANK 1-2 repeats) with AQP1 (via the N-terminal). Interacts (via ANK 1-13 repeats) with EPB42. Interacts directly with SLC4A1 (via the cytoplasmic domain); this interaction is mediated by the SLC4A1 Band 3-II and Band 3-III dimers. Post-translationally, regulated by phosphorylation. Acylated by palmitic acid group(s). In terms of processing, hydroxylated by HIF1AN at several asparagine and 1 aspartate residue within ANK repeat region; hydroxylation seems to increase the conformational stability of this region and may also modulate protein-protein interactions mediated by the ANK repeat region.

It localises to the cytoplasm. It is found in the cytoskeleton. The protein resides in the membrane. Its subcellular location is the sarcoplasmic reticulum. Its function is as follows. Component of the ankyrin-1 complex, a multiprotein complex involved in the stability and shape of the erythrocyte membrane. Attaches integral membrane proteins to cytoskeletal elements; binds to the erythrocyte membrane protein band 4.2, to Na-K ATPase, to the lymphocyte membrane protein GP85, and to the cytoskeletal proteins fodrin, tubulin, vimentin and desmin. Erythrocyte ankyrins also link spectrin (beta chain) to the cytoplasmic domain of the erythrocytes anion exchange protein; they retain most or all of these binding functions. This Mus musculus (Mouse) protein is Ankyrin-1.